Here is a 364-residue protein sequence, read N- to C-terminus: tRNA-specific 2-thiouridylase MnmA 1 (364 aa).

Residues 11–18 (GMSGGTDS) and F37 contribute to the ATP site. C96 acts as the Nucleophile in catalysis. C96 and C193 are oxidised to a cystine. G120 lines the ATP pocket. Residues 142-144 (KDQ) are interaction with tRNA. Residue C193 is the Cysteine persulfide intermediate of the active site. The segment at 309–310 (RY) is interaction with tRNA.

This sequence belongs to the MnmA/TRMU family.

It localises to the cytoplasm. It catalyses the reaction S-sulfanyl-L-cysteinyl-[protein] + uridine(34) in tRNA + AH2 + ATP = 2-thiouridine(34) in tRNA + L-cysteinyl-[protein] + A + AMP + diphosphate + H(+). Functionally, catalyzes the 2-thiolation of uridine at the wobble position (U34) of tRNA, leading to the formation of s(2)U34. In Bacteroides fragilis (strain YCH46), this protein is tRNA-specific 2-thiouridylase MnmA 1.